Here is a 271-residue protein sequence, read N- to C-terminus: Probable ribosome biogenesis GTPase A (271 aa).

A CP-type G domain is found at 21–175 (HDQLKKLASS…LSDTPGVFFK (155 aa)). GTP-binding positions include 127 to 132 (NVGKSS) and G171.

Belongs to the TRAFAC class YlqF/YawG GTPase family. MTG1 subfamily.

The protein localises to the cytoplasm. In terms of biological role, required for a late step of 50S ribosomal subunit assembly. Has GTPase activity. Binds to the 23S rRNA. The polypeptide is Probable ribosome biogenesis GTPase A (rbgA) (Mycoplasma pneumoniae (strain ATCC 29342 / M129 / Subtype 1) (Mycoplasmoides pneumoniae)).